Consider the following 184-residue polypeptide: Photosystem I assembly protein Ycf4 (184 aa).

Transmembrane regions (helical) follow at residues 21 to 43 and 58 to 80; these read NFCW…TSSY and IFFP…SSYL.

It belongs to the Ycf4 family.

Its subcellular location is the plastid. The protein resides in the chloroplast thylakoid membrane. Its function is as follows. Seems to be required for the assembly of the photosystem I complex. The chain is Photosystem I assembly protein Ycf4 from Calycanthus floridus var. glaucus (Eastern sweetshrub).